The primary structure comprises 485 residues: MSLQDPTKEHNNTSPSPKDEKTDYVVDWDGAEDAANPRNWTTRTKTAHVLCVSGFTLYSNLAAVMFAPGAPLLVADFHITSTIVASLTVSIYILGFVFGPFLLASLSELYGRLWLYHICNLIYLAFTVGCALSTNTAMFLAFRFICGCAASGPMTIGGGTIADLYEAEERGKAMALFGLGPLLGPVIGPVVGGFVTEHLNWRWTFYLVLILAAIIAIAGAVIMRETFEPVLLERKAADERVRTGNRQLRARTSDGTRTANQLLLRAIIRPLKMLCVSPIVLSLSVYCAFLFGLTYLLFTTFPAVFGLTYQFSTEQEGLAFLGLGVGMIFGIALFAILSDKLLHQPRGGTLARPELRLVLMVWSSPLVPIGFFWYGWSAQSTTHWIVPIIGTAVIGIGAFLILMPAQLYLVDAFGTEGAASALAVNTGLRSLFGAVLPLAGPPLYSKLDLGWGNSVLAFIGLAFVPVPFVLYKYGETLRKRFPIDR.

The segment at 1–22 (MSLQDPTKEHNNTSPSPKDEKT) is disordered. Helical transmembrane passes span 55–75 (FTLY…LLVA), 83–103 (IVAS…PFLL), 113–133 (LWLY…CALS), 144–164 (FICG…IADL), 175–195 (ALFG…GGFV), 203–223 (WTFY…AVIM), 278–298 (PIVL…YLLF), 317–337 (GLAF…FAIL), 357–377 (LVLM…YGWS), 384–404 (WIVP…ILMP), 421–441 (ALAV…LAGP), and 449–469 (LGWG…VPFV).

This sequence belongs to the major facilitator superfamily.

The protein resides in the cell membrane. Its function is as follows. MFS-type transporter; part of the gene cluster that mediates the biosynthesis of the trans-fused decalin-containing tetramic acid phomasetin. This Pyrenochaetopsis sp protein is MFS-type transporter phm3.